Here is a 563-residue protein sequence, read N- to C-terminus: Arginine--tRNA ligase (563 aa).

The 'HIGH' region signature appears at 119 to 129 (ANPTGPLHVGR).

This sequence belongs to the class-I aminoacyl-tRNA synthetase family.

It is found in the cytoplasm. The catalysed reaction is tRNA(Arg) + L-arginine + ATP = L-arginyl-tRNA(Arg) + AMP + diphosphate. The chain is Arginine--tRNA ligase from Methanocella arvoryzae (strain DSM 22066 / NBRC 105507 / MRE50).